A 409-amino-acid chain; its full sequence is Ubiquitin-associated domain-containing protein 1 (409 aa).

An N-acetylmethionine modification is found at M1. The 85-residue stretch at 14 to 98 (LRLHICAADG…LLLIKKRVPS (85 aa)) folds into the Ubiquitin-like domain. The tract at residues 101–122 (PKMADVSAEEKKKQEQKAPDKD) is disordered. Over residues 108–122 (AEEKKKQEQKAPDKD) the composition is skewed to basic and acidic residues. Residues 187–231 (DEDERVDETALRQLTEMGFPESRASKALRLNHMSVPQAMEWLIEH) form the UBA 1 domain. The interval 239 to 273 (TPLPGHAAQAGASAAATTSSTSSEAAVGTSVEDEE) is disordered. Residues 245 to 268 (AAQAGASAAATTSSTSSEAAVGTS) are compositionally biased toward low complexity. The 41-residue stretch at 292–332 (RADARAVISLMEMGFDEKEVIDALRVNNNQQNAACEWLLGD) folds into the UBA 2 domain. The STI1 domain occupies 357–396 (NPVVQLGLTNPKTLLAFEDMLENPLNSTQWMNDPETGPVM).

Component of the KPC complex composed of RNF123/KPC1 and UBAC1/KPC2. Interacts (via ubiquitin-like domain) with RNF123. Interacts (via ubiquitin-like and UBA domains) with the proteasome via its N-terminal domain.

Its subcellular location is the cytoplasm. Its pathway is protein modification; protein ubiquitination. Functionally, non-catalytic component of the KPC complex, a E3 ubiquitin-protein ligase complex that mediates polyubiquitination of target proteins, such as CDKN1B and NFKB1. The KPC complex catalyzes polyubiquitination and proteasome-mediated degradation of CDKN1B during G1 phase of the cell cycle. The KPC complex also acts as a key regulator of the NF-kappa-B signaling by promoting maturation of the NFKB1 component of NF-kappa-B by catalyzing ubiquitination of the NFKB1 p105 precursor. Within the KPC complex, UBAC1 acts as an adapter that promotes the transfer of target proteins that have been polyubiquitinated by RNF123/KPC1 to the 26S proteasome. The chain is Ubiquitin-associated domain-containing protein 1 (Ubac1) from Mus musculus (Mouse).